The following is a 406-amino-acid chain: Protein translocase subunit SecD (406 aa).

Helical transmembrane passes span 8–28 (IVIL…NPIN), 240–260 (MAAM…YRVA), 262–282 (FVAD…MCAI), 289–309 (PGIA…VIIF), 334–354 (FPAI…LFFF), and 361–381 (GFAV…IFIT).

The protein belongs to the SecD/SecF family. SecD subfamily. In terms of assembly, forms a complex with SecF. Part of the essential Sec protein translocation apparatus which comprises SecA, SecYEG and auxiliary proteins SecDF. Other proteins may also be involved.

It localises to the cell inner membrane. Functionally, part of the Sec protein translocase complex. Interacts with the SecYEG preprotein conducting channel. SecDF uses the proton motive force (PMF) to complete protein translocation after the ATP-dependent function of SecA. This chain is Protein translocase subunit SecD, found in Sebaldella termitidis (strain ATCC 33386 / NCTC 11300).